The primary structure comprises 473 residues: Aspartyl/glutamyl-tRNA(Asn/Gln) amidotransferase subunit B (473 aa).

Belongs to the GatB/GatE family. GatB subfamily. In terms of assembly, heterotrimer of A, B and C subunits.

The catalysed reaction is L-glutamyl-tRNA(Gln) + L-glutamine + ATP + H2O = L-glutaminyl-tRNA(Gln) + L-glutamate + ADP + phosphate + H(+). It catalyses the reaction L-aspartyl-tRNA(Asn) + L-glutamine + ATP + H2O = L-asparaginyl-tRNA(Asn) + L-glutamate + ADP + phosphate + 2 H(+). Functionally, allows the formation of correctly charged Asn-tRNA(Asn) or Gln-tRNA(Gln) through the transamidation of misacylated Asp-tRNA(Asn) or Glu-tRNA(Gln) in organisms which lack either or both of asparaginyl-tRNA or glutaminyl-tRNA synthetases. The reaction takes place in the presence of glutamine and ATP through an activated phospho-Asp-tRNA(Asn) or phospho-Glu-tRNA(Gln). This Mycoplasmopsis synoviae (strain 53) (Mycoplasma synoviae) protein is Aspartyl/glutamyl-tRNA(Asn/Gln) amidotransferase subunit B.